Consider the following 718-residue polypeptide: K(+)-insensitive pyrophosphate-energized proton pump (718 aa).

Transmembrane regions (helical) follow at residues 6–26 (AVLVLVIACGVLSVLFAIWAI), 61–81 (IAIVGIVVFLLAWYLLSLNAA), 83–103 (GFLIGAVLSGVTGFIGMHVSV), 112–132 (AASLSLAGGLELAFKSGAITG), 133–153 (LLVAGLALLGVSVYYFVLTVW), and 168–188 (VSLGFGASLISIFARLGGGIF). Substrate is bound at residue K190. D193, D197, N220, and D223 together coordinate Mg(2+). 6 consecutive transmembrane segments (helical) span residues 235-255 (LFETYAVTVVATMVLGAIFFH), 265-285 (LYPLMICGACVITSIAGTFFV), 300-320 (GLIATGLLSIVGLGVANTLTV), 335-355 (GTNLFVCGLIGLIVTGLIVVI), 385-405 (GLAVSLESTALPAIVIVGGII), and 413-433 (LFGTAIAVTAMLGIAGMIVAL). Residue D441 participates in Mg(2+) binding. Helical transmembrane passes span 472 to 492 (AVTKGYAIGSAGLGALVLFAA), 524 to 544 (YVVAGLIFGGLIPYLFGGMAM), 593 to 613 (IIPSLLPVLAPIVVYFGVLLI), and 620 to 640 (AFAALGASLLGVIINGLFVAI). Ca(2+) contacts are provided by D650, D682, and D686. K689 contacts substrate. The chain crosses the membrane as a helical span at residues 695 to 715 (AVNPAIKITNIVALLLLAVLA).

This sequence belongs to the H(+)-translocating pyrophosphatase (TC 3.A.10) family. K(+)-insensitive subfamily. As to quaternary structure, homodimer. The cofactor is Mg(2+).

The protein resides in the cell inner membrane. The enzyme catalyses diphosphate + H2O + H(+)(in) = 2 phosphate + 2 H(+)(out). Its function is as follows. Proton pump that utilizes the energy of pyrophosphate hydrolysis as the driving force for proton movement across the membrane. Generates a proton motive force. This Brucella melitensis biotype 1 (strain ATCC 23456 / CCUG 17765 / NCTC 10094 / 16M) protein is K(+)-insensitive pyrophosphate-energized proton pump.